A 391-amino-acid polypeptide reads, in one-letter code: mRNA-capping enzyme subunit alpha (391 aa).

The active-site N6-GMP-lysine intermediate is Lys63. Residues 363-391 (KERNRRPRDEDRKRVGGDDHDHGAKRARQ) are disordered.

The protein belongs to the eukaryotic GTase family. In terms of assembly, heterodimer. The mRNA-capping enzyme is composed of two separate chains alpha and beta, respectively a mRNA guanylyltransferase and an mRNA 5'-triphosphate monophosphatase.

The protein resides in the nucleus. It catalyses the reaction a 5'-end diphospho-ribonucleoside in mRNA + GTP + H(+) = a 5'-end (5'-triphosphoguanosine)-ribonucleoside in mRNA + diphosphate. Second step of mRNA capping. Transfer of the GMP moiety of GTP to the 5'-end of RNA via an enzyme-GMP covalent reaction intermediate. The sequence is that of mRNA-capping enzyme subunit alpha (CEG1) from Yarrowia lipolytica (strain CLIB 122 / E 150) (Yeast).